The following is a 536-amino-acid chain: Phosphoenolpyruvate carboxykinase (ATP) (536 aa).

Residues arginine 61, tyrosine 195, and lysine 201 each contribute to the substrate site. Residues lysine 201, histidine 220, and 236 to 244 contribute to the ATP site; that span reads GLSGTGKTT. Residues lysine 201 and histidine 220 each coordinate Mn(2+). Aspartate 257 contacts Mn(2+). The ATP site is built by glutamate 285, arginine 322, and threonine 447. Arginine 322 is a binding site for substrate.

This sequence belongs to the phosphoenolpyruvate carboxykinase (ATP) family. Mn(2+) is required as a cofactor.

The protein resides in the cytoplasm. The catalysed reaction is oxaloacetate + ATP = phosphoenolpyruvate + ADP + CO2. It functions in the pathway carbohydrate biosynthesis; gluconeogenesis. Functionally, involved in the gluconeogenesis. Catalyzes the conversion of oxaloacetate (OAA) to phosphoenolpyruvate (PEP) through direct phosphoryl transfer between the nucleoside triphosphate and OAA. The protein is Phosphoenolpyruvate carboxykinase (ATP) of Brucella suis biovar 1 (strain 1330).